The sequence spans 345 residues: MNTDDFDYELDEKFIAQTPLDKRDESKLMVMDRFNGNTEIKKFYNIIDYLNPGDVLVCNNTRVIPARLFGHRPEKEEKIEVLLLQQTEDKWECLVKPGKKMKLNQVIEFSDSVSAKVVDITEDGSRILKFEYEGIFEERLDELGNMPLPPYIKEKLNDKERYQTVYSKHNGSAAAPTAGLHFTNELLEKIKDKGIYVVFLTLHVGLGTFRPVKVDDVKDHHMHSEYYTISQETVDIINRQKSKGHNIIAVGTTSVRTLETVTHNNNSKLVAESGWTDIFIYPGFEFNIVDSLITNFHLPKSTLMMLVSAFSKKEYIFDAYEKAKQNDFRFFSFGDAMFINGGRNV.

It belongs to the QueA family. In terms of assembly, monomer.

It is found in the cytoplasm. The catalysed reaction is 7-aminomethyl-7-carbaguanosine(34) in tRNA + S-adenosyl-L-methionine = epoxyqueuosine(34) in tRNA + adenine + L-methionine + 2 H(+). Its pathway is tRNA modification; tRNA-queuosine biosynthesis. Functionally, transfers and isomerizes the ribose moiety from AdoMet to the 7-aminomethyl group of 7-deazaguanine (preQ1-tRNA) to give epoxyqueuosine (oQ-tRNA). In Finegoldia magna (strain ATCC 29328 / DSM 20472 / WAL 2508) (Peptostreptococcus magnus), this protein is S-adenosylmethionine:tRNA ribosyltransferase-isomerase.